The following is a 389-amino-acid chain: 8-amino-7-oxononanoate synthase (389 aa).

Residue R19 participates in substrate binding. 106-107 serves as a coordination point for pyridoxal 5'-phosphate; that stretch reads GY. Position 131 (H131) interacts with substrate. Pyridoxal 5'-phosphate-binding residues include S176, H204, and T233. K236 carries the post-translational modification N6-(pyridoxal phosphate)lysine. T350 lines the substrate pocket.

Belongs to the class-II pyridoxal-phosphate-dependent aminotransferase family. BioF subfamily. As to quaternary structure, homodimer. Requires pyridoxal 5'-phosphate as cofactor.

It carries out the reaction 6-carboxyhexanoyl-[ACP] + L-alanine + H(+) = (8S)-8-amino-7-oxononanoate + holo-[ACP] + CO2. The protein operates within cofactor biosynthesis; biotin biosynthesis. Functionally, catalyzes the decarboxylative condensation of pimeloyl-[acyl-carrier protein] and L-alanine to produce 8-amino-7-oxononanoate (AON), [acyl-carrier protein], and carbon dioxide. This Ectopseudomonas mendocina (strain ymp) (Pseudomonas mendocina) protein is 8-amino-7-oxononanoate synthase.